Reading from the N-terminus, the 309-residue chain is MEIQFLGTSAGQPSKSRNVSCTALKLLDELNEVWLFDVGEATQHQILKTNIRPRKVTRIFISHTHGDHIFGLPGFLSSRSFQGDGGPLTIYGPAGIEQFVQTSLKVSRTRVSYPIKYVVLKEDGLIFENNLFAVYTARLDHRVPSFGFRVVEKPRPGELLMDKVAEYNVPNGPLLGQLKAGKTITLSDGQKLDGRDFLGKERPGRVVTIIYDTRPTENIGKLADHADVLVHESTFNGDEEKMAHRYFHSTCLDAARIARDRHVRKLYLTHISARYTGKAGKELEHEARKIFKHTRLANDLDSFEITLRG.

Residues His-63, His-65, Asp-67, His-68, His-141, Asp-212, and His-270 each contribute to the Zn(2+) site. Residue Asp-67 is the Proton acceptor of the active site.

It belongs to the RNase Z family. As to quaternary structure, homodimer. Zn(2+) serves as cofactor.

It carries out the reaction Endonucleolytic cleavage of RNA, removing extra 3' nucleotides from tRNA precursor, generating 3' termini of tRNAs. A 3'-hydroxy group is left at the tRNA terminus and a 5'-phosphoryl group is left at the trailer molecule.. Its function is as follows. Zinc phosphodiesterase, which displays some tRNA 3'-processing endonuclease activity. Probably involved in tRNA maturation, by removing a 3'-trailer from precursor tRNA. In Lactobacillus gasseri (strain ATCC 33323 / DSM 20243 / BCRC 14619 / CIP 102991 / JCM 1131 / KCTC 3163 / NCIMB 11718 / NCTC 13722 / AM63), this protein is Ribonuclease Z.